The sequence spans 29 residues: Neurotoxin BmK A3-6 (29 aa).

In terms of processing, contains 3 disulfide bonds. Expressed by the venom gland.

The protein localises to the secreted. This Olivierus martensii (Manchurian scorpion) protein is Neurotoxin BmK A3-6.